A 475-amino-acid polypeptide reads, in one-letter code: MSPRPEIKAGVGFKAGVKDYRLTYYTPDYQTKDTDILAAFRMTPQPGVPAEECGAAVAAESSTGTWTTVWTDGLTSLDRYKGRCYAIEPVAGEENQYIAYVAYPLDLFEEGSVTNLFTSIVGNVFGFKALRALRLEDLRIPPAYSKTFQGPPHGIQVERDKLNKYGRPLLGCTIKPKLGLSAKNYGRAVYECLRGGLDFTKDDENVNSQPFMRWRDRFLFCAEAIYKSQGETGEIKGHYLNATAGTCEEMIKRAQFARELGMPIVMHDYLTGGFTANTSLAHYCRDNGLLLHIHRAMHAVLDRQKNHGMHFRVLAKALRLSGGDHIHSGTVVGKLEGERQVTLGFVDLLRDDYIEKDRSRGIYFTQDWVSLPGVLPVASGGIHVWHMPALTEIFGDDSVLQFGGGTLGHPWGNAPGAVANRVALEACVQARNEGRDLAREGNEIIREAAKWSPELAAACEVWKEIKFEFDTVDTL.

The propeptide occupies 1-2 (MS). Proline 3 bears the N-acetylproline mark. Lysine 14 is modified (N6,N6,N6-trimethyllysine). The substrate site is built by asparagine 123 and threonine 173. Catalysis depends on lysine 175, which acts as the Proton acceptor. Lysine 177 lines the substrate pocket. Residues lysine 201, aspartate 203, and glutamate 204 each coordinate Mg(2+). The residue at position 201 (lysine 201) is an N6-carboxylysine. The active-site Proton acceptor is the histidine 294. Positions 295, 327, and 379 each coordinate substrate.

Belongs to the RuBisCO large chain family. Type I subfamily. Heterohexadecamer of 8 large chains and 8 small chains; disulfide-linked. The disulfide link is formed within the large subunit homodimers. Mg(2+) is required as a cofactor. The disulfide bond which can form in the large chain dimeric partners within the hexadecamer appears to be associated with oxidative stress and protein turnover.

It localises to the plastid. The protein localises to the chloroplast. The enzyme catalyses 2 (2R)-3-phosphoglycerate + 2 H(+) = D-ribulose 1,5-bisphosphate + CO2 + H2O. It carries out the reaction D-ribulose 1,5-bisphosphate + O2 = 2-phosphoglycolate + (2R)-3-phosphoglycerate + 2 H(+). RuBisCO catalyzes two reactions: the carboxylation of D-ribulose 1,5-bisphosphate, the primary event in carbon dioxide fixation, as well as the oxidative fragmentation of the pentose substrate in the photorespiration process. Both reactions occur simultaneously and in competition at the same active site. The chain is Ribulose bisphosphate carboxylase large chain from Physcomitrium patens (Spreading-leaved earth moss).